The sequence spans 262 residues: MRIALCIEYDGASYHGWQSQKDVTSVQEELEKALMVVANEPIEVMCAGRTDAGVHGTGQVVHFDTNSVRKLPVWMVGVNANLPKNIAVRWVKEVNEDFHARFTATARRYRYIIFNNRQRPAIFSHGVSHYHETLDADLMHEAGQYLLGENDFTSFRAVRCQSRTPWRNLIHLKVTRHGDFIVIDIKANAFVHHMVRNITGSLIEVGRGKQKPEWVQWLLEAKDRKLAGATAKAEGLYLIDVDYPKEWDLPRVPLGPLFLPDN.

Asp51 serves as the catalytic Nucleophile. Tyr109 serves as a coordination point for substrate.

This sequence belongs to the tRNA pseudouridine synthase TruA family. As to quaternary structure, homodimer.

It catalyses the reaction uridine(38/39/40) in tRNA = pseudouridine(38/39/40) in tRNA. Formation of pseudouridine at positions 38, 39 and 40 in the anticodon stem and loop of transfer RNAs. The sequence is that of tRNA pseudouridine synthase A from Aliivibrio salmonicida (strain LFI1238) (Vibrio salmonicida (strain LFI1238)).